Reading from the N-terminus, the 668-residue chain is E3 ubiquitin-protein ligase RNF139 (668 aa).

The residue at position 2 (Ala-2) is an N-acetylalanine. 11 consecutive transmembrane segments (helical) span residues 51 to 71 (IGLQIFLRLLGIVVSSIVLIL), 85 to 105 (AFLLAATSVLVNYYAALHIDF), 125 to 145 (SLWMALIVLQLTFGIGYVTLL), 154 to 174 (LMILNILVPIIGLITELPLHI), 178 to 198 (VVLMSSLILIFNTVLVLAVKL), 293 to 313 (GMSAVISSIAHYLGLGILAFI), 323 to 343 (LGFVAPVLFFILALQTGLSGL), 356 to 376 (MCLLLTAVLHFIHGMTDPVLM), 390 to 410 (FPVLFVSACLFILPVLLSYVL), 420 to 440 (LFAVTAFCVELCLKVIVSLTV), and 470 to 490 (IIEFIFGVVMFGNGAYTMMFE). The segment at 547-586 (CAICYHEFTTSARITPCNHYFHALCLRKWLYIQDTCPMCH) adopts an RING-type; atypical zinc-finger fold. Residues 602 to 668 (SNNNGFIAPN…AAAEFNDDTD (67 aa)) form a disordered region. Positions 618-630 (EALREDAAGSDRE) are enriched in basic and acidic residues. Residues 631-641 (LNEDDSTDCDD) show a composition bias toward acidic residues. Ser-636 carries the phosphoserine modification. Phosphothreonine is present on residues Thr-637 and Thr-667.

As to quaternary structure, interacts with VHL. Interacts with MHC class I and HM13. Component of SCAP-SREBP complex composed of SREBF2, SCAP and RNF139; the complex hampers the interaction between SCAP and SEC24B, thereby reducing SREBF2 proteolytic processing. Interacts with SREBF2 (via C-terminal domain). Interacts with SCAP; the interaction inhibits the interaction of SCAP with SEC24B and hampering the ER to Golgi transport of the SCAP-SREBP complex. Interacts with SEC24B. Interacts with INSIG1 and INSIG2. Interacts with EIF3F and EIF3H; the interaction leads to protein translation inhibitions in a ubiquitination-dependent manner. Interacts with XBP1 isoform 1; the interaction induces ubiquitination and degradation of XBP1 isoform 1. Interacts with AUP1, AMFR and UBE2G2; interaction with AUP1 facilitates interaction of RNF139 with ubiquitin-conjugating enzyme UBE2G2 and ubiquitin ligase AMFR/gp78, leading to sterol-induced ubiquitination of HMGCR and its subsequent proteasomal degradation. Post-translationally, autoubiquitinated. Ubiquitination is induced by sterol and leads to ist degradation via the ubiquitin-proteasome pathway.

It localises to the endoplasmic reticulum membrane. The enzyme catalyses S-ubiquitinyl-[E2 ubiquitin-conjugating enzyme]-L-cysteine + [acceptor protein]-L-lysine = [E2 ubiquitin-conjugating enzyme]-L-cysteine + N(6)-ubiquitinyl-[acceptor protein]-L-lysine.. It functions in the pathway protein modification; protein ubiquitination. Its function is as follows. E3-ubiquitin ligase; acts as a negative regulator of cell proliferation through mechanisms involving G2/M arrest and cell death. Required for MHC class I ubiquitination in cells expressing the cytomegalovirus protein US2 before dislocation from the endoplasmic reticulum (ER). Affects SREBP processing by hindering the SREBP-SCAP complex translocation from the ER to the Golgi, thereby reducing SREBF2 target gene expression. Involved in the sterol-accelerated degradation of HMGCR. This is achieved through binding to INSIG1 and/or INSIG2 at the ER membrane. In addition, interaction of RNF139 with AUP1 facilitates interaction of RNF139 with ubiquitin-conjugating enzyme UBE2G2 and ubiquitin ligase AMFR, leading to ubiquitination of HMGCR. The ubiquitinated HMGCR is then released from the ER by the complex into the cytosol for subsequent destruction. Required for INSIG1 ubiquitination. May be required for EIF3 complex ubiquitination. This is E3 ubiquitin-protein ligase RNF139 from Mus musculus (Mouse).